The chain runs to 252 residues: MDMKGTYLVTVILLVSTLSVGMCSNGWIRAHATYYGVNDSPASLGGACGYDNPYHAGFGAHTAALSGELFRSGESCGGCYQVRCDFPADPKWCLRGAAVTVTATNFCPTNNNNGWCNLPRHHFDMSSPAFFRIARRGNEGIVPVFYRRVGCKRRGGVRFTMRGQGNFNMVMISNVGGGGSVRSVAVRGSKGKTWLQMTRNWGANWQSSGDLRGQRLSFKVTLTDSKTQTFLNVVPSSWWFGQTFSSRGRQFV.

A signal peptide spans 1–23 (MDMKGTYLVTVILLVSTLSVGMC). Residues 45 to 156 (GGACGYDNPY…RRVGCKRRGG (112 aa)) form the Expansin-like EG45 domain. In terms of domain architecture, Expansin-like CBD spans 166–246 (NFNMVMISNV…SWWFGQTFSS (81 aa)).

Belongs to the expansin family. Expansin A subfamily.

It is found in the secreted. Its subcellular location is the cell wall. It localises to the membrane. Functionally, causes loosening and extension of plant cell walls by disrupting non-covalent bonding between cellulose microfibrils and matrix glucans. No enzymatic activity has been found. The chain is Expansin-A12 (EXPA12) from Arabidopsis thaliana (Mouse-ear cress).